A 458-amino-acid polypeptide reads, in one-letter code: Phosphoglucosamine mutase (458 aa).

Ser-106 serves as the catalytic Phosphoserine intermediate. Ser-106, Asp-247, Asp-249, and Asp-251 together coordinate Mg(2+). Ser-106 carries the phosphoserine modification.

The protein belongs to the phosphohexose mutase family. The cofactor is Mg(2+). Activated by phosphorylation.

The catalysed reaction is alpha-D-glucosamine 1-phosphate = D-glucosamine 6-phosphate. In terms of biological role, catalyzes the conversion of glucosamine-6-phosphate to glucosamine-1-phosphate. The sequence is that of Phosphoglucosamine mutase from Chlamydia abortus (strain DSM 27085 / S26/3) (Chlamydophila abortus).